The primary structure comprises 1176 residues: Leucine--tRNA ligase, cytoplasmic (1176 aa).

2 residues coordinate L-leucine: Tyr52 and Tyr54. The short motif at 60–63 (HLGH) is the 'HIGH' region element. The interval 115–142 (PDFPDEEDEEEETNVKTEDTRIKDKAKG) is disordered. Residues 117 to 126 (FPDEEDEEEE) are compositionally biased toward acidic residues. The span at 127 to 139 (TNVKTEDTRIKDK) shows a compositional bias: basic and acidic residues. Ser167 carries the phosphoserine modification. Residues 260–509 (GPQEYTLLKL…DAGDALIYME (250 aa)) are editing domain. L-leucine is bound by residues Leu594 and Ser597. Positions 716 to 720 (KMSKS) match the 'KMSKS' region motif. Lys719 lines the ATP pocket. Ser720 carries the post-translational modification Phosphoserine. N6-acetyllysine is present on residues Lys970 and Lys1047.

It belongs to the class-I aminoacyl-tRNA synthetase family.

The protein localises to the cytoplasm. The enzyme catalyses tRNA(Leu) + L-leucine + ATP = L-leucyl-tRNA(Leu) + AMP + diphosphate. It catalyses the reaction L-methionyl-tRNA(Leu) + H2O = tRNA(Leu) + L-methionine + H(+). With respect to regulation, 5-fluoro-1,3-dihydro-1-hydroxy-1,2-benzoxaborole inhibits LARS1 by forming a covalent adduct with the 3' adenosine of tRNA(Leu) at the editing site, thus locking the enzyme in an inactive conformation. Aminoacyl-tRNA synthetase that catalyzes the specific attachment of leucine to its cognate tRNA (tRNA(Leu)). It performs tRNA aminoacylation in a two-step reaction: Leu is initially activated by ATP to form a leucyl-adenylate (Leu-AMP) intermediate; then the leucyl moiety is transferred to the acceptor 3' end of the tRNA to yield leucyl-tRNA. To improve the fidelity of catalytic reactions, it is also able to hydrolyze misactivated aminoacyl-adenylate intermediates (pre-transfer editing) and mischarged aminoacyl-tRNAs (post-transfer editing). In Pongo abelii (Sumatran orangutan), this protein is Leucine--tRNA ligase, cytoplasmic (LARS1).